A 104-amino-acid chain; its full sequence is Large ribosomal subunit protein uL24 (104 aa).

It belongs to the universal ribosomal protein uL24 family. In terms of assembly, part of the 50S ribosomal subunit.

Its function is as follows. One of two assembly initiator proteins, it binds directly to the 5'-end of the 23S rRNA, where it nucleates assembly of the 50S subunit. Functionally, one of the proteins that surrounds the polypeptide exit tunnel on the outside of the subunit. The chain is Large ribosomal subunit protein uL24 from Bradyrhizobium diazoefficiens (strain JCM 10833 / BCRC 13528 / IAM 13628 / NBRC 14792 / USDA 110).